The chain runs to 72 residues: Conotoxin Gla(2)-TxVI/A (72 aa).

Residues 1–19 (MQKLIILLLVAAVLMSTQA) form the signal peptide. Positions 20–44 (LFQEKRPMKKIDFLSKGKTDAEKQQ) are excised as a propeptide. Intrachain disulfides connect C48–C62, C55–C66, and C61–C70. A 4-carboxyglutamate modification is found at E56. Residue P58 is modified to 4-hydroxyproline. Residue S71 is modified to Serine amide.

The protein belongs to the conotoxin O2 superfamily. Post-translationally, brominated at one of the Trp residues. Expressed by the venom duct.

The protein resides in the secreted. The chain is Conotoxin Gla(2)-TxVI/A from Conus textile (Cloth-of-gold cone).